A 290-amino-acid polypeptide reads, in one-letter code: Phosphoribosylaminoimidazole-succinocarboxamide synthase (290 aa).

The protein belongs to the SAICAR synthetase family.

The catalysed reaction is 5-amino-1-(5-phospho-D-ribosyl)imidazole-4-carboxylate + L-aspartate + ATP = (2S)-2-[5-amino-1-(5-phospho-beta-D-ribosyl)imidazole-4-carboxamido]succinate + ADP + phosphate + 2 H(+). Its pathway is purine metabolism; IMP biosynthesis via de novo pathway; 5-amino-1-(5-phospho-D-ribosyl)imidazole-4-carboxamide from 5-amino-1-(5-phospho-D-ribosyl)imidazole-4-carboxylate: step 1/2. The chain is Phosphoribosylaminoimidazole-succinocarboxamide synthase (purC) from Haemophilus influenzae (strain ATCC 51907 / DSM 11121 / KW20 / Rd).